The following is a 327-amino-acid chain: Serine/threonine-protein phosphatase PP1-1 (327 aa).

Asp-63, His-65, Asp-91, and Asn-123 together coordinate Mn(2+). The Proton donor role is filled by His-124. Residues His-172 and His-247 each contribute to the Mn(2+) site. Positions 305–327 are disordered; it reads GYQGSSQNWHMTPPRKNKTGNSK. Thr-316 is subject to Phosphothreonine; by CDC2. Residues 317 to 327 are compositionally biased toward basic residues; it reads PPRKNKTGNSK.

The protein belongs to the PPP phosphatase family. PP-1 subfamily. As to quaternary structure, oligomer. Mn(2+) is required as a cofactor.

The protein resides in the nucleus. It carries out the reaction O-phospho-L-seryl-[protein] + H2O = L-seryl-[protein] + phosphate. The enzyme catalyses O-phospho-L-threonyl-[protein] + H2O = L-threonyl-[protein] + phosphate. Its function is as follows. Essential role in cell cycle control. PP1 is perhaps required for exit from mitosis. The polypeptide is Serine/threonine-protein phosphatase PP1-1 (dis2) (Schizosaccharomyces pombe (strain 972 / ATCC 24843) (Fission yeast)).